We begin with the raw amino-acid sequence, 327 residues long: Transaldolase (327 aa).

K132 functions as the Schiff-base intermediate with substrate in the catalytic mechanism.

It belongs to the transaldolase family. Type 1 subfamily.

Its subcellular location is the cytoplasm. It catalyses the reaction D-sedoheptulose 7-phosphate + D-glyceraldehyde 3-phosphate = D-erythrose 4-phosphate + beta-D-fructose 6-phosphate. The protein operates within carbohydrate degradation; pentose phosphate pathway; D-glyceraldehyde 3-phosphate and beta-D-fructose 6-phosphate from D-ribose 5-phosphate and D-xylulose 5-phosphate (non-oxidative stage): step 2/3. Its function is as follows. Transaldolase is important for the balance of metabolites in the pentose-phosphate pathway. This is Transaldolase from Chlamydia pneumoniae (Chlamydophila pneumoniae).